The primary structure comprises 216 residues: Glycerol-3-phosphate acyltransferase 3 (216 aa).

5 helical membrane passes run 6-26, 58-78, 92-112, 125-145, and 158-178; these read LLLV…YLVS, LVAA…GLVI, ILFA…WPVF, FGGM…VLII, and ITGV…SGFP.

This sequence belongs to the PlsY family. As to quaternary structure, probably interacts with PlsX.

Its subcellular location is the cell membrane. It catalyses the reaction an acyl phosphate + sn-glycerol 3-phosphate = a 1-acyl-sn-glycero-3-phosphate + phosphate. It participates in lipid metabolism; phospholipid metabolism. Functionally, catalyzes the transfer of an acyl group from acyl-phosphate (acyl-PO(4)) to glycerol-3-phosphate (G3P) to form lysophosphatidic acid (LPA). This enzyme utilizes acyl-phosphate as fatty acyl donor, but not acyl-CoA or acyl-ACP. This chain is Glycerol-3-phosphate acyltransferase 3, found in Dehalococcoides mccartyi (strain ATCC BAA-2266 / KCTC 15142 / 195) (Dehalococcoides ethenogenes (strain 195)).